An 84-amino-acid polypeptide reads, in one-letter code: Defensin-like protein 199 (84 aa).

Positions Met-1–Ser-24 are cleaved as a signal peptide. Disulfide bonds link Cys-40-Cys-80, Cys-47-Cys-72, Cys-56-Cys-78, and Cys-60-Cys-79.

This sequence belongs to the DEFL family.

The protein resides in the secreted. This Arabidopsis thaliana (Mouse-ear cress) protein is Defensin-like protein 199.